Consider the following 302-residue polypeptide: Proteasome subunit beta (302 aa).

The segment covering Met1–His10 has biased composition (basic and acidic residues). Residues Met1–Ala21 are disordered. The propeptide at Met1–Ala67 is removed in mature form; by autocatalysis. Thr68 serves as the catalytic Nucleophile. Positions Arg283–Asn302 are disordered.

This sequence belongs to the peptidase T1B family. The 20S proteasome core is composed of 14 alpha and 14 beta subunits that assemble into four stacked heptameric rings, resulting in a barrel-shaped structure. The two inner rings, each composed of seven catalytic beta subunits, are sandwiched by two outer rings, each composed of seven alpha subunits. The catalytic chamber with the active sites is on the inside of the barrel. Has a gated structure, the ends of the cylinder being occluded by the N-termini of the alpha-subunits. Is capped by the proteasome-associated ATPase, ARC.

The protein localises to the cytoplasm. It carries out the reaction Cleavage of peptide bonds with very broad specificity.. Its pathway is protein degradation; proteasomal Pup-dependent pathway. Its activity is regulated as follows. The formation of the proteasomal ATPase ARC-20S proteasome complex, likely via the docking of the C-termini of ARC into the intersubunit pockets in the alpha-rings, may trigger opening of the gate for substrate entry. Interconversion between the open-gate and close-gate conformations leads to a dynamic regulation of the 20S proteasome proteolysis activity. Component of the proteasome core, a large protease complex with broad specificity involved in protein degradation. In Kineococcus radiotolerans (strain ATCC BAA-149 / DSM 14245 / SRS30216), this protein is Proteasome subunit beta.